Reading from the N-terminus, the 195-residue chain is Ribonuclease HII (195 aa).

One can recognise an RNase H type-2 domain in the interval 6–195 (SLIAGVDEVG…KSFISRLEIN (190 aa)). 3 residues coordinate a divalent metal cation: Asp-12, Glu-13, and Asp-108.

Belongs to the RNase HII family. Requires Mn(2+) as cofactor. Mg(2+) serves as cofactor.

The protein resides in the cytoplasm. It carries out the reaction Endonucleolytic cleavage to 5'-phosphomonoester.. In terms of biological role, endonuclease that specifically degrades the RNA of RNA-DNA hybrids. This Prochlorococcus marinus (strain NATL1A) protein is Ribonuclease HII.